Here is a 461-residue protein sequence, read N- to C-terminus: Ubiquinone hydroxylase UbiM (461 aa).

It belongs to the UbiH/COQ6 family. FAD serves as cofactor.

The enzyme catalyses a 2-(all-trans-polyprenyl)phenol + NADPH + O2 + H(+) = a 3-(all-trans-polyprenyl)benzene-1,2-diol + NADP(+) + H2O. It carries out the reaction a 5-methoxy-2-methyl-3-(all-trans-polyprenyl)benzene-1,4-diol + AH2 + O2 = a 3-demethylubiquinol + A + H2O. It participates in cofactor biosynthesis; ubiquinone biosynthesis. Its function is as follows. Catalyzes the hydroxylation of three positions of the aromatic ring during ubiquinone biosynthesis. The chain is Ubiquinone hydroxylase UbiM from Neisseria meningitidis serogroup C / serotype 2a (strain ATCC 700532 / DSM 15464 / FAM18).